A 50-amino-acid polypeptide reads, in one-letter code: Small ribosomal subunit protein uS14 (50 aa).

Positions 15, 18, 33, and 36 each coordinate Zn(2+).

Belongs to the universal ribosomal protein uS14 family. Zinc-binding uS14 subfamily. In terms of assembly, part of the 30S ribosomal subunit. It depends on Zn(2+) as a cofactor.

Its function is as follows. Binds 16S rRNA, required for the assembly of 30S particles. The sequence is that of Small ribosomal subunit protein uS14 from Methanosarcina mazei (strain ATCC BAA-159 / DSM 3647 / Goe1 / Go1 / JCM 11833 / OCM 88) (Methanosarcina frisia).